The primary structure comprises 254 residues: E3 ubiquitin-protein ligase NEURL3 (254 aa).

The NHR domain occupies A17–P174. The RING-type zinc finger occupies C197–R236.

It localises to the cytoplasm. The catalysed reaction is S-ubiquitinyl-[E2 ubiquitin-conjugating enzyme]-L-cysteine + [acceptor protein]-L-lysine = [E2 ubiquitin-conjugating enzyme]-L-cysteine + N(6)-ubiquitinyl-[acceptor protein]-L-lysine.. It functions in the pathway protein modification; protein ubiquitination. In terms of biological role, E3 ubiquitin-protein ligase that plays a role in various biological processes such as lung development or innate immunity. Seems to utilize UBE2E1. Promotes innate antiviral response by catalyzing 'Lys-63'-linked ubiquitination of IRF7. Also inhibits hepatitis C virus assembly by directly binding to viral E1 envelope glycoprotein to disrupt its interaction with E2. Plays an essential role in TLR4-mediated activation of MAPK pathways by promoting 'Lys-48'-linked polyubiquitination of the phosphatase DUSP1/MKP1. This is E3 ubiquitin-protein ligase NEURL3 (Neurl3) from Rattus norvegicus (Rat).